The sequence spans 144 residues: MLMPKRVKHRKVQRGRMKGKATRGNFLAYGDFGIQATTCGWITSNQIEAARIAINRYIRRGGKLWIKIFPDKPVTEKPAETRMGSGKGSVEYWVAVVKPGRVLFELSGVDEEKAREAMRLASHKLPVKTKFVTRRDFEEMGGEE.

It belongs to the universal ribosomal protein uL16 family. Part of the 50S ribosomal subunit.

Its function is as follows. Binds 23S rRNA and is also seen to make contacts with the A and possibly P site tRNAs. In Clostridium perfringens (strain ATCC 13124 / DSM 756 / JCM 1290 / NCIMB 6125 / NCTC 8237 / Type A), this protein is Large ribosomal subunit protein uL16.